The following is a 432-amino-acid chain: Gamma-glutamyl phosphate reductase (432 aa).

The protein belongs to the gamma-glutamyl phosphate reductase family.

Its subcellular location is the cytoplasm. The enzyme catalyses L-glutamate 5-semialdehyde + phosphate + NADP(+) = L-glutamyl 5-phosphate + NADPH + H(+). Its pathway is amino-acid biosynthesis; L-proline biosynthesis; L-glutamate 5-semialdehyde from L-glutamate: step 2/2. Catalyzes the NADPH-dependent reduction of L-glutamate 5-phosphate into L-glutamate 5-semialdehyde and phosphate. The product spontaneously undergoes cyclization to form 1-pyrroline-5-carboxylate. This Kineococcus radiotolerans (strain ATCC BAA-149 / DSM 14245 / SRS30216) protein is Gamma-glutamyl phosphate reductase.